Here is a 554-residue protein sequence, read N- to C-terminus: Potassium-transporting ATPase potassium-binding subunit (554 aa).

Transmembrane regions (helical) follow at residues 1–21 (MSPV…LALA), 60–80 (PAYL…LYVL), 131–151 (GLAV…VALV), 174–194 (VRVL…CGAI), 246–266 (PGPF…FALT), 279–299 (GYAI…LMMW), 375–395 (GLYG…LMVG), 412–432 (FAAC…AAAM), 481–501 (IGIV…ALAG), and 525–545 (GLLV…ALAL).

It belongs to the KdpA family. The system is composed of three essential subunits: KdpA, KdpB and KdpC.

Its subcellular location is the cell membrane. Functionally, part of the high-affinity ATP-driven potassium transport (or Kdp) system, which catalyzes the hydrolysis of ATP coupled with the electrogenic transport of potassium into the cytoplasm. This subunit binds the extracellular potassium ions and delivers the ions to the membrane domain of KdpB through an intramembrane tunnel. This Streptomyces avermitilis (strain ATCC 31267 / DSM 46492 / JCM 5070 / NBRC 14893 / NCIMB 12804 / NRRL 8165 / MA-4680) protein is Potassium-transporting ATPase potassium-binding subunit.